The primary structure comprises 234 residues: 3-dehydroquinate dehydratase (234 aa).

Residues 33 to 35 and arginine 68 contribute to the 3-dehydroquinate site; that span reads EWR. The active-site Proton donor/acceptor is histidine 124. Lysine 151 serves as the catalytic Schiff-base intermediate with substrate. 3 residues coordinate 3-dehydroquinate: arginine 193, serine 214, and glutamine 218.

This sequence belongs to the type-I 3-dehydroquinase family. Homodimer.

It catalyses the reaction 3-dehydroquinate = 3-dehydroshikimate + H2O. It participates in metabolic intermediate biosynthesis; chorismate biosynthesis; chorismate from D-erythrose 4-phosphate and phosphoenolpyruvate: step 3/7. In terms of biological role, involved in the third step of the chorismate pathway, which leads to the biosynthesis of aromatic amino acids. Catalyzes the cis-dehydration of 3-dehydroquinate (DHQ) and introduces the first double bond of the aromatic ring to yield 3-dehydroshikimate. This is 3-dehydroquinate dehydratase from Syntrophobacter fumaroxidans (strain DSM 10017 / MPOB).